A 48-amino-acid chain; its full sequence is Large ribosomal subunit protein bL33A (48 aa).

The protein belongs to the bacterial ribosomal protein bL33 family.

This chain is Large ribosomal subunit protein bL33A, found in Limosilactobacillus fermentum (strain NBRC 3956 / LMG 18251) (Lactobacillus fermentum).